A 394-amino-acid polypeptide reads, in one-letter code: Phloroisovalerophenone synthase (394 aa).

Residue Cys166 is part of the active site.

Belongs to the thiolase-like superfamily. Chalcone/stilbene synthases family. As to quaternary structure, homodimer. Expressed in lupulin gland. Present at low levels in leaves but accumulates in cones.

It carries out the reaction 3-methylbutanoyl-CoA + 3 malonyl-CoA + 3 H(+) = phlorisovalerophenone + 3 CO2 + 4 CoA. The enzyme catalyses (E)-4-coumaroyl-CoA + 3 malonyl-CoA + 3 H(+) = 2',4,4',6'-tetrahydroxychalcone + 3 CO2 + 4 CoA. It catalyses the reaction 2-methylpropanoyl-CoA + 3 malonyl-CoA + 3 H(+) = phlorisobutanophenone + 3 CO2 + 4 CoA. Its pathway is secondary metabolite biosynthesis. Its function is as follows. Involved in the biosynthesis of prenylated phenolics natural products which contribute to the bitter taste of beer and display broad biological activities. Polyketide synthase that can use 3-methylbutanoyl-CoA (isovaleryl-CoA) and 2-methylpropanoyl-CoA (isobutyryl-CoA) as substrates to produce phlorisovalerophenone (PIVP) and phlorisobutyrophenone (2-methyl-1-(2,4,6-trihydroxyphenyl)propan-1-one), respectively, intermediates in the biosynthesis of the bitter acids (alpha and beta) acids. Can also produce naringenin-chalcone (2',4,4',6'-tetrahydroxychalcone) from 4-coumaroyl-CoA with a lower efficiency. This chain is Phloroisovalerophenone synthase, found in Humulus lupulus (European hop).